The sequence spans 1037 residues: Signal-induced proliferation-associated protein 1 (1037 aa).

The interval 1–85 is disordered; that stretch reads MWAGGVGSPR…ASRPAATPTR (85 aa). Residue T62 is modified to Phosphothreonine. Residues S65, S178, S299, and S309 each carry the phosphoserine modification. The Rap-GAP domain maps to 316–534; the sequence is LLTLDEQVLS…RTRQQYLQDL (219 aa). The PDZ domain occupies 682–758; it reads ELALPRDGQG…VCVTVLPPDE (77 aa). Phosphoserine occurs at positions 812 and 834. Disordered stretches follow at residues 830-849 and 855-898; these read HNSL…LPNT and LVTT…ASIL. Residues 871-881 show a composition bias toward low complexity; it reads PPSQDQSGSPS. The residue at position 907 (S907) is a Phosphoserine. Residues 943–969 are disordered; sequence REGQPISESGDPKEALKCDSEPEPGSL. The segment covering 952–962 has biased composition (basic and acidic residues); that stretch reads GDPKEALKCDS. The stretch at 968–1025 forms a coiled coil; sequence SLSEKVSHLESMLWKLQEDLQREKADRAALEEEVRSLRHNNQRLLAESESAATRLLLA.

As to quaternary structure, interacts with RRP1B; the interaction leads to inhibition of SIPA1 GTPase activity. Preferentially expressed in both fetal and adult lymphohematopoietic tissues.

It is found in the nucleus. Its subcellular location is the cytoplasm. It localises to the perinuclear region. The protein resides in the endomembrane system. GTPase activator for the nuclear Ras-related regulatory proteins Rap1, Rsr1 and Ran in vitro, converting them to the putatively inactive GDP-bound state. Affects cell cycle progression. This chain is Signal-induced proliferation-associated protein 1 (Sipa1), found in Mus musculus (Mouse).